Reading from the N-terminus, the 128-residue chain is Fluoride-specific ion channel FluC (128 aa).

Helical transmembrane passes span 5–25 (IVAIFVGAGLGALLRWFLSLA), 35–55 (LGTLASNLIGGYVIGVAAVVF), 67–87 (LFVITGFLGGLTTFSTYSVEV), and 96–116 (FGWALAVAALHLTGSFALTAL). Na(+)-binding residues include Gly-75 and Thr-78.

It belongs to the fluoride channel Fluc/FEX (TC 1.A.43) family.

The protein localises to the cell inner membrane. The catalysed reaction is fluoride(in) = fluoride(out). Its activity is regulated as follows. Na(+) is not transported, but it plays an essential structural role and its presence is essential for fluoride channel function. Fluoride-specific ion channel. Important for reducing fluoride concentration in the cell, thus reducing its toxicity. This is Fluoride-specific ion channel FluC from Burkholderia cenocepacia (strain HI2424).